Consider the following 336-residue polypeptide: Anthranilate phosphoribosyltransferase (336 aa).

5-phospho-alpha-D-ribose 1-diphosphate is bound by residues G79, 82 to 83 (GD), T87, 89 to 92 (NIST), 107 to 115 (KHGNRAMSS), and S119. G79 is an anthranilate binding site. S91 contacts Mg(2+). Anthranilate is bound at residue N110. Residue R165 coordinates anthranilate. Positions 225 and 226 each coordinate Mg(2+).

It belongs to the anthranilate phosphoribosyltransferase family. Homodimer. It depends on Mg(2+) as a cofactor.

The catalysed reaction is N-(5-phospho-beta-D-ribosyl)anthranilate + diphosphate = 5-phospho-alpha-D-ribose 1-diphosphate + anthranilate. It functions in the pathway amino-acid biosynthesis; L-tryptophan biosynthesis; L-tryptophan from chorismate: step 2/5. In terms of biological role, catalyzes the transfer of the phosphoribosyl group of 5-phosphorylribose-1-pyrophosphate (PRPP) to anthranilate to yield N-(5'-phosphoribosyl)-anthranilate (PRA). This chain is Anthranilate phosphoribosyltransferase, found in Dictyoglomus thermophilum (strain ATCC 35947 / DSM 3960 / H-6-12).